The primary structure comprises 237 residues: DNA repair protein RecO (237 aa).

The protein belongs to the RecO family.

Functionally, involved in DNA repair and RecF pathway recombination. In Cereibacter sphaeroides (strain ATCC 17025 / ATH 2.4.3) (Rhodobacter sphaeroides), this protein is DNA repair protein RecO.